A 552-amino-acid chain; its full sequence is Histone deacetylase 15 (552 aa).

The segment at 86–115 (EFVKWCCVNCTMSNPGDMVHCCICGEHKES) adopts a RanBP2-type zinc-finger fold. A histone deacetylase region spans residues 149–462 (STAVGFDERM…ATAVIKVLLG (314 aa)). The active-site Proton donor/acceptor is the histidine 277. Zn(2+) is bound by residues aspartate 313, histidine 315, and aspartate 404.

Belongs to the histone deacetylase family. HD type 2 subfamily. As to quaternary structure, interacts with PIF3 in the dark. Interacts with HY5. Interacts with MYB96. Forms homotetramers. The cofactor is Zn(2+). As to expression, expressed in stems, leaves, flowers, siliques and mature seeds.

The protein resides in the nucleus. Its subcellular location is the cytoplasm. It catalyses the reaction N(6)-acetyl-L-lysyl-[histone] + H2O = L-lysyl-[histone] + acetate. Inhibited by trichostatin A (TSA), a well-known histone deacetylase inhibitor. Its function is as follows. Responsible for the deacetylation of lysine residues on the N-terminal part of the core histones (H2A, H2B, H3 and H4). Histone deacetylation gives a tag for epigenetic repression and plays an important role in transcriptional regulation, cell cycle progression and developmental events. Histone deacetylases act via the formation of large multiprotein complexes. Represses chlorophyll biosynthesis and photosynthesis in the dark. Is recruited by PIF3 to the promoters of chlorophyll biosynthetic and photosynthetic genes, and represses their transcription by histone deacetylation. Involved in the repression of hypocotyl cell elongation to promote photomorphogenesis. Is recruited by HY5 to the promoters of a subset of cell wall organization and auxin signaling-related genes, and represses gene expression by decreasing the levels of histone H4 acetylation in a light-dependent manner. Promotes abscisic acid (ABA) signaling. Is recruited by MYB96 to the promoters of a subset of Rho GTPase (ROP) genes, which repress ABA signaling at the early stages of signal transduction. Represses ROP expression by removing acetyl groups of histone H3 and H4 from the cognate regions, particularly in the presence of ABA. Represses the plant response to elevated ambient temperature by directly repressing warm temperature-responsive genes. In Arabidopsis thaliana (Mouse-ear cress), this protein is Histone deacetylase 15.